Consider the following 320-residue polypeptide: Delta-aminolevulinic acid dehydratase (320 aa).

3 residues coordinate Zn(2+): Cys-119, Cys-121, and Cys-129. The active-site Schiff-base intermediate with substrate is Lys-194. Residues Arg-204 and Arg-216 each contribute to the 5-aminolevulinate site. Glu-232 is a Mg(2+) binding site. Catalysis depends on Lys-247, which acts as the Schiff-base intermediate with substrate. Ser-273 is a 5-aminolevulinate binding site.

It belongs to the ALAD family. As to quaternary structure, homooctamer. Zn(2+) is required as a cofactor.

It carries out the reaction 2 5-aminolevulinate = porphobilinogen + 2 H2O + H(+). It participates in porphyrin-containing compound metabolism; protoporphyrin-IX biosynthesis; coproporphyrinogen-III from 5-aminolevulinate: step 1/4. In terms of biological role, catalyzes an early step in the biosynthesis of tetrapyrroles. Binds two molecules of 5-aminolevulinate per subunit, each at a distinct site, and catalyzes their condensation to form porphobilinogen. This Methanothermus sociabilis protein is Delta-aminolevulinic acid dehydratase (hemB).